Here is a 600-residue protein sequence, read N- to C-terminus: 1-deoxy-D-xylulose-5-phosphate synthase (600 aa).

Thiamine diphosphate-binding positions include His-57 and 98–100; that span reads GHA. Asp-125 lines the Mg(2+) pocket. Thiamine diphosphate contacts are provided by residues 126–127, Asn-155, Tyr-264, and Glu-343; that span reads AS. Position 155 (Asn-155) interacts with Mg(2+).

This sequence belongs to the transketolase family. DXPS subfamily. Homodimer. Requires Mg(2+) as cofactor. It depends on thiamine diphosphate as a cofactor.

The catalysed reaction is D-glyceraldehyde 3-phosphate + pyruvate + H(+) = 1-deoxy-D-xylulose 5-phosphate + CO2. Its pathway is metabolic intermediate biosynthesis; 1-deoxy-D-xylulose 5-phosphate biosynthesis; 1-deoxy-D-xylulose 5-phosphate from D-glyceraldehyde 3-phosphate and pyruvate: step 1/1. Catalyzes the acyloin condensation reaction between C atoms 2 and 3 of pyruvate and glyceraldehyde 3-phosphate to yield 1-deoxy-D-xylulose-5-phosphate (DXP). The chain is 1-deoxy-D-xylulose-5-phosphate synthase from Fusobacterium nucleatum subsp. nucleatum (strain ATCC 25586 / DSM 15643 / BCRC 10681 / CIP 101130 / JCM 8532 / KCTC 2640 / LMG 13131 / VPI 4355).